The sequence spans 270 residues: DNA packaging protein OPG160 (270 aa).

Residue valine 55–glycine 62 participates in ATP binding.

The protein belongs to the orthopoxvirus OPG160 protein family. As to quaternary structure, interacts with protein OPG137.

Participates in viral DNA packaging and virion morphogenesis. The chain is DNA packaging protein OPG160 (OPG160) from Homo sapiens (Human).